The following is a 403-amino-acid chain: L-alanine/L-glutamate racemase (403 aa).

Pyridoxal 5'-phosphate is bound by residues 62–64, 92–93, and 209–211; these read YSN, GL, and AVT. Lysine 212 is subject to N6-(pyridoxal phosphate)lysine.

This sequence belongs to the trans-sulfuration enzymes family. Homotetramer; dimer of active dimers. It depends on pyridoxal 5'-phosphate as a cofactor.

It catalyses the reaction L-alanine = D-alanine. It carries out the reaction L-glutamate = D-glutamate. The catalysed reaction is L,L-cystathionine + H2O = L-homocysteine + pyruvate + NH4(+). It participates in cell wall biogenesis; peptidoglycan biosynthesis. Its function is as follows. Catalyzes the racemization of L-alanine to D-alanine, and of L-glutamate to D-glutamate. The activity is low, but likely physiological since W.pipientis wMel lacks canonical alr and murI genes, while D-alanine and D-glutamate are essential components of peptidoglycan. Also displays a vestigial cystathionine beta-lyase (CBL) activity, cleaving cystathionine to homocysteine and pyruvate; however, this reaction seems not to be physiologically relevant since the only met gene in the genome of this obligately intracellular parasitic bacterium is metC, demonstrating that it is a methionine auxotroph. The sequence is that of L-alanine/L-glutamate racemase from Wolbachia pipientis wMel.